A 1388-amino-acid polypeptide reads, in one-letter code: Rho-associated protein kinase 2 (1388 aa).

The disordered stretch occupies residues 1 to 27; it reads MSRPPPTGKMPGAPETAPGDGAGASRQ. The Protein kinase domain maps to 92–354; the sequence is YDVVKVIGRG…VEEIRQHPFF (263 aa). ATP-binding positions include 98-106 and Lys-121; that span reads IGRGAFGEV. Asp-214 (proton acceptor) is an active-site residue. The AGC-kinase C-terminal domain occupies 357-425; it reads DQWHWDNIRE…YRENLLLSDS (69 aa). Residues 363–784 are interaction with PPP1R12A; it reads NIRETAAPVV…INELLKQKDV (422 aa). The interval 373-420 is interaction with NPM1; the sequence is PELSSDIDSSNFDDIEDDKGDVETFPIPKAFVGNQLPFIGFTYYRENL. A Phosphothreonine; by ROCK2 modification is found at Thr-414. Coiled coils occupy residues 429–1024 and 1053–1131; these read RETD…EKQL and DTDV…IGLD. An REM-1 domain is found at 497-573; sequence ALRQLEREKA…LDETNALLRT (77 aa). Tyr-722 carries the post-translational modification Phosphotyrosine; by SRC. In terms of domain architecture, RhoBD spans 979-1047; it reads TSDVANLANE…LAEIMNRKEP (69 aa). Residues 979–1047 form an RHOA binding region; that stretch reads TSDVANLANE…LAEIMNRKEP (69 aa). Ser-1137 is modified (phosphoserine). A PH domain is found at 1150–1349; that stretch reads ESRLEGWLSL…WVSRLVKKIP (200 aa). Position 1212 is a phosphothreonine (Thr-1212). The Phorbol-ester/DAG-type zinc finger occupies 1260–1315; the sequence is GHEFIPTLYHFPTNCEACMKPLWHMFKPPPALECRRCHIKCHKDHMDKKEEIIAPC. The interval 1345 to 1388 is disordered; it reads VKKIPKKPPAPDPFARSSPRTSMKIQQNQSIRRPSRQLAPNKPS. Ser-1362 and Ser-1374 each carry phosphoserine. Polar residues predominate over residues 1362-1376; it reads SPRTSMKIQQNQSIR.

The protein belongs to the protein kinase superfamily. AGC Ser/Thr protein kinase family. As to quaternary structure, homodimer. Interacts with IRS1. Interacts with RAF1. Interacts with RHOA (activated by GTP), RHOB and RHOC. Interacts with PPP1R12A. Interacts with EP300. Interacts with CHORDC1. Interacts with BRCA2. Interacts with NPM1; this interaction enhances ROCK2 activity. Interacts with SORL1. Interacts with PJVK. The cofactor is Mg(2+). In terms of processing, phosphorylation at Tyr-722 reduces its binding to RHOA and is crucial for focal adhesion dynamics. Dephosphorylation by PTPN11 stimulates its RHOA binding activity. Cleaved by granzyme B during apoptosis. This leads to constitutive activation of the kinase and membrane blebbing. In terms of tissue distribution, expressed in the brain (at protein level).

It is found in the cytoplasm. Its subcellular location is the cell membrane. The protein resides in the nucleus. The protein localises to the cytoskeleton. It localises to the microtubule organizing center. It is found in the centrosome. It carries out the reaction L-seryl-[protein] + ATP = O-phospho-L-seryl-[protein] + ADP + H(+). The catalysed reaction is L-threonyl-[protein] + ATP = O-phospho-L-threonyl-[protein] + ADP + H(+). Activated by RHOA binding. Inhibited by Y-27632. Its function is as follows. Protein kinase which is a key regulator of actin cytoskeleton and cell polarity. Involved in regulation of smooth muscle contraction, actin cytoskeleton organization, stress fiber and focal adhesion formation, neurite retraction, cell adhesion and motility via phosphorylation of ADD1, BRCA2, CNN1, EZR, DPYSL2, EP300, MSN, MYL9/MLC2, NPM1, RDX, PPP1R12A and VIM. Phosphorylates SORL1 and IRF4. Acts as a negative regulator of VEGF-induced angiogenic endothelial cell activation. Positively regulates the activation of p42/MAPK1-p44/MAPK3 and of p90RSK/RPS6KA1 during myogenic differentiation. Plays an important role in the timely initiation of centrosome duplication. Inhibits keratinocyte terminal differentiation. May regulate closure of the eyelids and ventral body wall through organization of actomyosin bundles. Plays a critical role in the regulation of spine and synaptic properties in the hippocampus. Plays an important role in generating the circadian rhythm of the aortic myofilament Ca(2+) sensitivity and vascular contractility by modulating the myosin light chain phosphorylation. The protein is Rho-associated protein kinase 2 (ROCK2) of Homo sapiens (Human).